Reading from the N-terminus, the 375-residue chain is Probable trehalose-phosphate phosphatase 7 (375 aa).

It belongs to the trehalose phosphatase family. The cofactor is a divalent metal cation.

It carries out the reaction alpha,alpha-trehalose 6-phosphate + H2O = alpha,alpha-trehalose + phosphate. The protein operates within glycan biosynthesis; trehalose biosynthesis. Functionally, removes the phosphate from trehalose 6-phosphate to produce free trehalose. Trehalose accumulation in plant may improve abiotic stress tolerance. The sequence is that of Probable trehalose-phosphate phosphatase 7 (TPP7) from Oryza sativa subsp. japonica (Rice).